The primary structure comprises 229 residues: 2-C-methyl-D-erythritol 4-phosphate cytidylyltransferase (229 aa).

The protein belongs to the IspD/TarI cytidylyltransferase family. IspD subfamily.

It catalyses the reaction 2-C-methyl-D-erythritol 4-phosphate + CTP + H(+) = 4-CDP-2-C-methyl-D-erythritol + diphosphate. The protein operates within isoprenoid biosynthesis; isopentenyl diphosphate biosynthesis via DXP pathway; isopentenyl diphosphate from 1-deoxy-D-xylulose 5-phosphate: step 2/6. Functionally, catalyzes the formation of 4-diphosphocytidyl-2-C-methyl-D-erythritol from CTP and 2-C-methyl-D-erythritol 4-phosphate (MEP). The sequence is that of 2-C-methyl-D-erythritol 4-phosphate cytidylyltransferase from Clostridium botulinum (strain ATCC 19397 / Type A).